A 292-amino-acid chain; its full sequence is MTEFDLSTREGRWKHFGSVDPIEGTKPTTKNEMTDLQSTHKDFLFEIEEVGIKNLVYPVLVDQYQTAGTFSFSTSLTKDEKGINMSRIIESVEKHYDNGIELEFNTLYQVLRTLQTNMKQNAAGVDVSGKWFFDRYSPTTNIKAVGNADVTYGLAIDGDKVTRKELTIEATVTTLCPCSKEISEYSAHNQRGVVTVKTYINKDQNIVDDYKNKILDAMEANASSILYPILKRPDEKRVTERAYENPRFVEDLIRLIAADLVEFDWLDGFDIECRNEESIHQHDAFAKLKYRK.

The protein belongs to the GTP cyclohydrolase IV family.

The enzyme catalyses GTP + H2O = 7,8-dihydroneopterin 3'-triphosphate + formate + H(+). The protein operates within cofactor biosynthesis; 7,8-dihydroneopterin triphosphate biosynthesis; 7,8-dihydroneopterin triphosphate from GTP: step 1/1. In terms of biological role, converts GTP to 7,8-dihydroneopterin triphosphate. In Staphylococcus aureus (strain Mu50 / ATCC 700699), this protein is GTP cyclohydrolase FolE2.